The following is a 306-amino-acid chain: Follistatin-related protein 1 (306 aa).

A signal peptide spans 1–18 (MWKRWLALSLVTIALVHG). Positions 28-51 (ICANVFCGAGRECAVTEKGEPTCL) constitute a Follistatin-like domain. 5 disulfide bridges follow: cysteine 29-cysteine 40, cysteine 34-cysteine 50, cysteine 52-cysteine 82, cysteine 56-cysteine 75, and cysteine 64-cysteine 96. A Kazal-like domain is found at 46–98 (GEPTCLCIEQCKPHKRPVCGSNGKTYLNHCELHRDACLTGSKIQVDYDGHCKE). N-linked (GlcNAc...) asparagine glycosylation is present at asparagine 142. Residues 142–176 (NYSEILDKYFKSFDNGDSHLDSSEFLKFVEQNETA) enclose the EF-hand 1 domain. At serine 163 the chain carries Phosphoserine. N-linked (GlcNAc...) asparagine glycans are attached at residues asparagine 173 and asparagine 178. Residues 191–226 (LRSLCVDALIELSDENADWKLSFQEFLKCLNPSFNP) enclose the EF-hand 2 domain. Residues 231–285 (CALEDETYADGAETEVDCNRCVCSCGHWVCTAMTCDGKNQKGVQTHTEEEKTGYV) enclose the VWFC domain.

In terms of assembly, homodimer. Interacts with SCN10A. Interacts with DIP2A; DIP2A may act as a cell surface receptor for FSTL1. Interacts with BMP4. Interacts with CD14; this interaction promotes TL4-mediated signaling cascade. During central nervous system development, strongly expressed in the telencephalon, diencephalon, brainstem, limbic system and spinal cord. Widely expressed in all organs.

It is found in the secreted. Functionally, secreted glycoprotein that is involved in various physiological processes, such as angiogenesis, regulation of the immune response, cell proliferation and differentiation. Plays a role in the development of the central nervous system, skeletal system, lungs, and ureter. Promotes endothelial cell survival, migration and differentiation into network structures in an AKT-dependent manner. Also promotes survival of cardiac myocytes. Initiates various signaling cascades by activating different receptors on the cell surface such as DIP2A, TLR4 or BMP receptors. In Mus musculus (Mouse), this protein is Follistatin-related protein 1 (Fstl1).